The chain runs to 205 residues: Small ribosomal subunit protein uS3c (205 aa).

Positions 37–106 (IRQLLRDYVL…TWRISLVEVS (70 aa)) constitute a KH type-2 domain.

It belongs to the universal ribosomal protein uS3 family. Part of the 30S ribosomal subunit.

It localises to the plastid. It is found in the chloroplast. This is Small ribosomal subunit protein uS3c (rps3) from Cyanidioschyzon merolae (strain NIES-3377 / 10D) (Unicellular red alga).